We begin with the raw amino-acid sequence, 83 residues long: MSSGGLLLLLGLLTLWEVLTPVSSKDRPKFCELLPDTGSCEDFTGAFHYSTRDRECIEFIYGGCGGNANNFITKEECESTCAA.

The first 24 residues, 1 to 24 (MSSGGLLLLLGLLTLWEVLTPVSS), serve as a signal peptide directing secretion. Residues 31-81 (CELLPDTGSCEDFTGAFHYSTRDRECIEFIYGGCGGNANNFITKEECESTC) enclose the BPTI/Kunitz inhibitor domain. Cystine bridges form between cysteine 31/cysteine 81, cysteine 40/cysteine 64, and cysteine 56/cysteine 77.

This sequence belongs to the venom Kunitz-type family. As to expression, expressed by the venom gland.

The protein localises to the secreted. Serine protease inhibitor. Does not inhibit plasmin, and does not reduce blood loss in the mouse tail vein blood loss model. This chain is Kunitz-type serine protease inhibitor textilinin-5, found in Pseudonaja textilis textilis (Eastern brown snake).